The chain runs to 122 residues: Large ribosomal subunit protein uL14 (122 aa).

It belongs to the universal ribosomal protein uL14 family. As to quaternary structure, part of the 50S ribosomal subunit. Forms a cluster with proteins L3 and L19. In the 70S ribosome, L14 and L19 interact and together make contacts with the 16S rRNA in bridges B5 and B8.

Binds to 23S rRNA. Forms part of two intersubunit bridges in the 70S ribosome. The protein is Large ribosomal subunit protein uL14 of Syntrophus aciditrophicus (strain SB).